We begin with the raw amino-acid sequence, 155 residues long: Cytochrome c-type biogenesis protein CcmE (155 aa).

Topologically, residues 1–8 are cytoplasmic; sequence MNPLRKKR. A helical; Signal-anchor for type II membrane protein transmembrane segment spans residues 9–29; the sequence is LLIIVALLAGVGLAVTLALSA. The Periplasmic segment spans residues 30–155; sequence LQENINLFYT…AASPTPVKQG (126 aa). Heme is bound by residues His-124 and Tyr-128.

It belongs to the CcmE/CycJ family.

The protein localises to the cell inner membrane. Heme chaperone required for the biogenesis of c-type cytochromes. Transiently binds heme delivered by CcmC and transfers the heme to apo-cytochromes in a process facilitated by CcmF and CcmH. The sequence is that of Cytochrome c-type biogenesis protein CcmE from Pseudomonas syringae pv. syringae (strain B728a).